Reading from the N-terminus, the 293-residue chain is Probable flavonol synthase 6 (293 aa).

Residues 156–253 (KAQYVMRINY…RMSWPILVEP (98 aa)) enclose the Fe2OG dioxygenase domain. 164–166 (NYY) contacts 2-oxoglutarate. Residues histidine 178, aspartate 180, and histidine 234 each contribute to the Fe cation site. 244–246 (RMS) is a 2-oxoglutarate binding site.

It belongs to the iron/ascorbate-dependent oxidoreductase family. Requires Fe(2+) as cofactor.

The enzyme catalyses a (2R,3R)-dihydroflavonol + 2-oxoglutarate + O2 = a flavonol + succinate + CO2 + H2O. It functions in the pathway secondary metabolite biosynthesis; flavonoid biosynthesis. In Arabidopsis thaliana (Mouse-ear cress), this protein is Probable flavonol synthase 6 (FLS6).